Reading from the N-terminus, the 473-residue chain is 3-isopropylmalate dehydratase large subunit (473 aa).

[4Fe-4S] cluster-binding residues include cysteine 354, cysteine 414, and cysteine 417.

Belongs to the aconitase/IPM isomerase family. LeuC type 1 subfamily. In terms of assembly, heterodimer of LeuC and LeuD. [4Fe-4S] cluster is required as a cofactor.

It catalyses the reaction (2R,3S)-3-isopropylmalate = (2S)-2-isopropylmalate. The protein operates within amino-acid biosynthesis; L-leucine biosynthesis; L-leucine from 3-methyl-2-oxobutanoate: step 2/4. In terms of biological role, catalyzes the isomerization between 2-isopropylmalate and 3-isopropylmalate, via the formation of 2-isopropylmaleate. This chain is 3-isopropylmalate dehydratase large subunit, found in Mycobacterium bovis (strain ATCC BAA-935 / AF2122/97).